The following is a 128-amino-acid chain: uncharacterized protein (128 aa).

This is an uncharacterized protein from Mycoplasma genitalium (strain ATCC 33530 / DSM 19775 / NCTC 10195 / G37) (Mycoplasmoides genitalium).